The following is a 706-amino-acid chain: mRNA (2'-O-methyladenosine-N(6)-)-methyltransferase (706 aa).

The segment at 1 to 34 (MANENHGSPREGASLLSHSPGTSSQSQPCSPKPV) is disordered. Polar residues predominate over residues 16–29 (LSHSPGTSSQSQPC). The residue at position 30 (serine 30) is a Phosphoserine. The WW domain maps to 43–77 (ELVHAGWEKCWSRRESRPYYFNRFTNQSLWEMPVL). Positions 88–148 (GLNATPLPQD…QSVPSSPSIP (61 aa)) are disordered. The Nuclear localization signal signature appears at 109-113 (KSRKR). Phosphoserine is present on serine 116. Residues 132-147 (IPVTPTSQSVPSSPSI) show a composition bias toward low complexity. Phosphothreonine is present on threonine 152. Substrate-binding residues include arginine 234 and arginine 264. 552–555 (NPPF) is a binding site for S-adenosyl-L-methionine. Substrate-binding positions include glutamate 557 and 587 to 591 (WREPP). 613–615 (FEH) contributes to the S-adenosyl-L-methionine binding site. The segment at 663-706 (TAAYKQSGRSHGSSSSSSSSSSSSEAKDRDSGREQGPSREPHPT) is disordered. The Nuclear localization signal motif lies at 668-686 (QSGRSHGSSSSSSSSSSSS). Over residues 675–686 (SSSSSSSSSSSS) the composition is skewed to low complexity. Basic and acidic residues predominate over residues 687–706 (EAKDRDSGREQGPSREPHPT).

The protein belongs to the CAPAM family. As to quaternary structure, interacts with POLR2A; interacts with the phosphorylated C-terminal domain (CTD) of POLR2A.

It localises to the nucleus. The catalysed reaction is a 5'-end (N(7)-methyl 5'-triphosphoguanosine)-(2'-O-methyladenosine) in mRNA + S-adenosyl-L-methionine = a 5'-end (N(7)-methyl 5'-triphosphoguanosine)-(N(6),2'-O-dimethyladenosine) in mRNA + S-adenosyl-L-homocysteine + H(+). With respect to regulation, cap-specific adenosine methyltransferase activity is inhibited by zinc. Functionally, cap-specific adenosine methyltransferase that catalyzes formation of N(6),2'-O-dimethyladenosine cap (m6A(m)) by methylating the adenosine at the second transcribed position of capped mRNAs. Recruited to the early elongation complex of RNA polymerase II (RNAPII) via interaction with POLR2A and mediates formation of m6A(m) co-transcriptionally. The protein is mRNA (2'-O-methyladenosine-N(6)-)-methyltransferase of Mus musculus (Mouse).